Consider the following 1641-residue polypeptide: Maestro heat-like repeat-containing protein family member 1 (1641 aa).

HEAT repeat units follow at residues 3–41 (ESSM…ARPV), 159–198 (VPFL…GALE), 344–382 (CSSP…SAAA), 385–423 (EDKK…HGYL), 1048–1086 (PDQL…ERGG), 1358–1396 (LMLL…GCPD), and 1605–1641 (QVDL…VKLA).

This sequence belongs to the MROH1 family. In terms of assembly, homooligomer; homooligomerizes at lysosome scission sites.

It localises to the lysosome membrane. Its function is as follows. Lysosome fission factor. Recruited to lysosomes by RAB7 (RAB7A or RAB7B) at scission sites and homooligomerizes to mediate the constriction and scission of lysosomal tubules. May sever membranes by inserting amphipathic helices into one bilayer leaflet. Lysosome fission is required to maintain their steady-state number, shape, size, composition and function, and to accomplish regeneration. The polypeptide is Maestro heat-like repeat-containing protein family member 1 (Homo sapiens (Human)).